A 318-amino-acid polypeptide reads, in one-letter code: Phospho-N-acetylmuramoyl-pentapeptide-transferase (318 aa).

Helical transmembrane passes span 5 to 25, 50 to 70, 71 to 91, 115 to 135, 139 to 159, 173 to 193, 198 to 218, 222 to 242, 248 to 268, and 298 to 318; these read LKPL…VLAF, PTMG…VLAP, PSPL…IGLV, VLLG…GSVI, VTGW…LLLV, GLAA…ALTL, LVTF…YNFH, VFMG…LAIM, VLPV…LQVV, and VLFF…LLTI.

It belongs to the glycosyltransferase 4 family. MraY subfamily. Mg(2+) is required as a cofactor.

The protein resides in the cell membrane. The catalysed reaction is UDP-N-acetyl-alpha-D-muramoyl-L-alanyl-gamma-D-glutamyl-meso-2,6-diaminopimeloyl-D-alanyl-D-alanine + di-trans,octa-cis-undecaprenyl phosphate = di-trans,octa-cis-undecaprenyl diphospho-N-acetyl-alpha-D-muramoyl-L-alanyl-D-glutamyl-meso-2,6-diaminopimeloyl-D-alanyl-D-alanine + UMP. The protein operates within cell wall biogenesis; peptidoglycan biosynthesis. Catalyzes the initial step of the lipid cycle reactions in the biosynthesis of the cell wall peptidoglycan: transfers peptidoglycan precursor phospho-MurNAc-pentapeptide from UDP-MurNAc-pentapeptide onto the lipid carrier undecaprenyl phosphate, yielding undecaprenyl-pyrophosphoryl-MurNAc-pentapeptide, known as lipid I. The protein is Phospho-N-acetylmuramoyl-pentapeptide-transferase of Moorella thermoacetica (strain ATCC 39073 / JCM 9320).